The sequence spans 216 residues: MSRRKQPDSPLFPFQPPVPDFAFERAAQRDGLWPVAGADEAGRGPLAGPVVAAAVILNPDAIPTGLNDSKLLTAEQRETLFEEILATATVSIASSSSARIDTTDILKASLDAMRRAVHGLEVAARIVLVDGRDVPPGLSCHAKAIVKGDSRSVSIAAASIVAKVTRDRMMARADATFPLYGFAHHAGYATVKHRTAIESHGPCSLHRMSFRPFRQL.

Residues 33–216 enclose the RNase H type-2 domain; the sequence is WPVAGADEAG…RMSFRPFRQL (184 aa). Residues Asp39, Glu40, and Asp130 each coordinate a divalent metal cation.

This sequence belongs to the RNase HII family. It depends on Mn(2+) as a cofactor. Mg(2+) serves as cofactor.

It is found in the cytoplasm. It catalyses the reaction Endonucleolytic cleavage to 5'-phosphomonoester.. Its function is as follows. Endonuclease that specifically degrades the RNA of RNA-DNA hybrids. The protein is Ribonuclease HII of Sinorhizobium medicae (strain WSM419) (Ensifer medicae).